The chain runs to 105 residues: MAINNQRIRIRLKAFDHKLIDISTQEIVDTAKKTGAQVKGPIPLPVRKERFTILISPHVNKKARDQYEIRTHKRLIDIVEPTDKTVDALMKLDLASGVDVQISLS.

It belongs to the universal ribosomal protein uS10 family. In terms of assembly, part of the 30S ribosomal subunit.

Its function is as follows. Involved in the binding of tRNA to the ribosomes. This Francisella tularensis subsp. mediasiatica (strain FSC147) protein is Small ribosomal subunit protein uS10.